The sequence spans 141 residues: Large ribosomal subunit protein uL16 (141 aa).

This sequence belongs to the universal ribosomal protein uL16 family. As to quaternary structure, part of the 50S ribosomal subunit.

In terms of biological role, binds 23S rRNA and is also seen to make contacts with the A and possibly P site tRNAs. In Geobacillus kaustophilus (strain HTA426), this protein is Large ribosomal subunit protein uL16.